A 353-amino-acid chain; its full sequence is Phosphate acyltransferase (353 aa).

This sequence belongs to the PlsX family. Homodimer. Probably interacts with PlsY.

It is found in the cytoplasm. It catalyses the reaction a fatty acyl-[ACP] + phosphate = an acyl phosphate + holo-[ACP]. It participates in lipid metabolism; phospholipid metabolism. Functionally, catalyzes the reversible formation of acyl-phosphate (acyl-PO(4)) from acyl-[acyl-carrier-protein] (acyl-ACP). This enzyme utilizes acyl-ACP as fatty acyl donor, but not acyl-CoA. The chain is Phosphate acyltransferase from Myxococcus xanthus (strain DK1622).